A 294-amino-acid polypeptide reads, in one-letter code: tRNA pseudouridine synthase B (294 aa).

The active-site Nucleophile is aspartate 39.

Belongs to the pseudouridine synthase TruB family. Type 1 subfamily.

The enzyme catalyses uridine(55) in tRNA = pseudouridine(55) in tRNA. Responsible for synthesis of pseudouridine from uracil-55 in the psi GC loop of transfer RNAs. The protein is tRNA pseudouridine synthase B of Streptococcus agalactiae serotype Ia (strain ATCC 27591 / A909 / CDC SS700).